A 230-amino-acid chain; its full sequence is 2,3-bisphosphoglycerate-dependent phosphoglycerate mutase 1 (230 aa).

Substrate-binding positions include 8–15 (RHGQSEWN), 21–22 (TG), Arg-60, 87–90 (ERHY), Lys-98, 114–115 (RR), and 183–184 (GN). Residue His-9 is the Tele-phosphohistidine intermediate of the active site. Residue Glu-87 is the Proton donor/acceptor of the active site.

The protein belongs to the phosphoglycerate mutase family. BPG-dependent PGAM subfamily.

It catalyses the reaction (2R)-2-phosphoglycerate = (2R)-3-phosphoglycerate. Its pathway is carbohydrate degradation; glycolysis; pyruvate from D-glyceraldehyde 3-phosphate: step 3/5. Catalyzes the interconversion of 2-phosphoglycerate and 3-phosphoglycerate. The protein is 2,3-bisphosphoglycerate-dependent phosphoglycerate mutase 1 of Lactobacillus johnsonii (strain CNCM I-12250 / La1 / NCC 533).